The following is a 195-amino-acid chain: Kiwa protein KwaA (195 aa).

A run of 3 helical transmembrane segments spans residues 10 to 30 (GLYILSLAMLFVFIIILTAKI), 46 to 66 (LVLTNIVPIVCFVFFLFSIYF), and 117 to 137 (IAYLLLVVVIGIIFIKTDKYY).

The protein resides in the cell inner membrane. Its function is as follows. Component of antiviral defense system Kiwa, composed of KwaA and KwaB. Expression of Kiwa in E.coli (strain MG1655) confers resistance to phages lambda and SECphi18. This chain is Kiwa protein KwaA, found in Escherichia coli O55:H7 (strain RM12579 / EPEC).